The sequence spans 73 residues: DNA-directed RNA polymerase subunit omega (73 aa).

The protein belongs to the RNA polymerase subunit omega family. The RNAP catalytic core consists of 2 alpha, 1 beta, 1 beta' and 1 omega subunit. When a sigma factor is associated with the core the holoenzyme is formed, which can initiate transcription.

The enzyme catalyses RNA(n) + a ribonucleoside 5'-triphosphate = RNA(n+1) + diphosphate. In terms of biological role, promotes RNA polymerase assembly. Latches the N- and C-terminal regions of the beta' subunit thereby facilitating its interaction with the beta and alpha subunits. The protein is DNA-directed RNA polymerase subunit omega of Maridesulfovibrio salexigens (strain ATCC 14822 / DSM 2638 / NCIMB 8403 / VKM B-1763) (Desulfovibrio salexigens).